The primary structure comprises 570 residues: Sulfite reductase [NADPH] hemoprotein beta-component (570 aa).

The [4Fe-4S] cluster site is built by Cys-434, Cys-440, Cys-479, and Cys-483. Siroheme is bound at residue Cys-483.

Belongs to the nitrite and sulfite reductase 4Fe-4S domain family. Alpha(8)-beta(8). The alpha component is a flavoprotein, the beta component is a hemoprotein. Requires siroheme as cofactor. [4Fe-4S] cluster serves as cofactor.

The catalysed reaction is hydrogen sulfide + 3 NADP(+) + 3 H2O = sulfite + 3 NADPH + 4 H(+). The protein operates within sulfur metabolism; hydrogen sulfide biosynthesis; hydrogen sulfide from sulfite (NADPH route): step 1/1. Component of the sulfite reductase complex that catalyzes the 6-electron reduction of sulfite to sulfide. This is one of several activities required for the biosynthesis of L-cysteine from sulfate. The sequence is that of Sulfite reductase [NADPH] hemoprotein beta-component from Shigella dysenteriae serotype 1 (strain Sd197).